We begin with the raw amino-acid sequence, 477 residues long: Glutamate--tRNA ligase 2 (477 aa).

A 'HIGH' region motif is present at residues 12-22 (PSPTGRMHLGN). Zn(2+) is bound by residues cysteine 109, cysteine 111, cysteine 136, and histidine 138. The 'KMSKS' region motif lies at 253 to 257 (PLSKR). Lysine 256 contacts ATP.

It belongs to the class-I aminoacyl-tRNA synthetase family. Glutamate--tRNA ligase type 1 subfamily. In terms of assembly, monomer. Zn(2+) is required as a cofactor.

It is found in the cytoplasm. The catalysed reaction is tRNA(Glu) + L-glutamate + ATP = L-glutamyl-tRNA(Glu) + AMP + diphosphate. Its function is as follows. Catalyzes the attachment of glutamate to tRNA(Glu) in a two-step reaction: glutamate is first activated by ATP to form Glu-AMP and then transferred to the acceptor end of tRNA(Glu). The sequence is that of Glutamate--tRNA ligase 2 from Alkalilimnicola ehrlichii (strain ATCC BAA-1101 / DSM 17681 / MLHE-1).